The following is a 448-amino-acid chain: uncharacterized protein (448 aa).

An N6-(pyridoxal phosphate)lysine modification is found at Lys-280.

It belongs to the class-III pyridoxal-phosphate-dependent aminotransferase family.

It localises to the cytoplasm. The protein resides in the mitochondrion. This is an uncharacterized protein from Schizosaccharomyces pombe (strain 972 / ATCC 24843) (Fission yeast).